A 62-amino-acid chain; its full sequence is Protein DsrB (62 aa).

This sequence belongs to the DsrB family.

In Shigella flexneri serotype 5b (strain 8401), this protein is Protein DsrB.